The chain runs to 482 residues: E3 ubiquitin-protein ligase parkin (482 aa).

Positions 30-99 (LSIYVKTNTG…LGQQSVLHAI (70 aa)) constitute a Ubiquitin-like domain. Serine 94 is subject to Phosphoserine; by Pink1. The RING-type 0; atypical zinc finger occupies 157 to 246 (AHFFVHCSQC…SGGEKDFAAP (90 aa)). Zn(2+) contacts are provided by cysteine 163, cysteine 166, cysteine 178, and cysteine 181. A Phosphothreonine; by Pink1 modification is found at threonine 187. The Zn(2+) site is built by cysteine 208, cysteine 232, histidine 235, cysteine 259, cysteine 262, cysteine 274, histidine 278, cysteine 281, cysteine 284, cysteine 310, cysteine 314, cysteine 353, cysteine 358, cysteine 373, cysteine 377, cysteine 382, cysteine 385, histidine 390, cysteine 394, cysteine 436, and cysteine 439. The TRIAD supradomain stretch occupies residues 255–482 (KNVPCLACTD…RDCMGAHWFG (228 aa)). Residues 259-314 (CLACTDVSDTVLVFPCASQHVTCIDCFRHYCRSRLGERQFMPHPDFGYTLPCPAGC) form an RING-type 1 zinc finger. IBR-type zinc fingers lie at residues 334–394 (DRYQ…IGEC) and 432–473 (STKP…EWTR). The RING-type 2; atypical zinc finger occupies 436–467 (CPKCRTPTERDGGCMHMVCTRAGCGFEWCWVC). Residue cysteine 449 is part of the active site. 6 residues coordinate Zn(2+): cysteine 454, cysteine 459, cysteine 464, cysteine 467, cysteine 475, and histidine 479.

This sequence belongs to the RBR family. Parkin subfamily. As to quaternary structure, forms an E3 ubiquitin ligase complex with E2 ubiquitin-conjugating enzymes. Interacts with Pink1. Interacts with Marf. Interacts with Paris. Interacts with septins Septin1 and pnut. Post-translationally, auto-ubiquitinates in an E2-dependent manner leading to its own degradation. In terms of processing, phosphorylated. Activation requires phosphorylation at Ser-94 by Pink1 and binding to Pink1-phosphorylated polyubiquitin chains. Phosphorylation at Thr-187 by Pink1 is also important for mitochondrial localization. In terms of tissue distribution, in oocytes, accumulates in early egg chambers where it is enriched until stages 9-10, localizing mainly to the posterior pole and anterior margin (at protein level). After stage 10 it is no longer detected in the oocyte (at protein level). In embryos, ubiquitously expressed in the early stages (stages 2 to 5) (at protein level). Expression levels decrease at later stages and becomes restricted to the brain and nerve cord from stage 9 (at protein level). Relatively higher levels of expression in the head compared to the body. Enriched in the dorsomedial (DM) dopaminergic neurons.

It is found in the mitochondrion. It localises to the cytoplasm. The protein resides in the cytosol. It catalyses the reaction [E2 ubiquitin-conjugating enzyme]-S-ubiquitinyl-L-cysteine + [acceptor protein]-L-lysine = [E2 ubiquitin-conjugating enzyme]-L-cysteine + [acceptor protein]-N(6)-ubiquitinyl-L-lysine.. The protein operates within protein modification; protein ubiquitination. In the autoinhibited state the side chain of Phe-481 inserts into a hydrophobic groove in RING-0, occluding the ubiquitin acceptor site Cys-449, whereas the REP repressor element binds RING-1 and blocks its E2-binding site. Activation of park requires 2 steps: (1) phosphorylation at Ser-94 by Pink1 and (2) binding to phosphorylated ubiquitin, leading to unlock repression of the catalytic Cys-449 by the RING-0 region via an allosteric mechanism and converting park to its fully-active form. According to another report, phosphorylation at Ser-94 by Pink1 is not essential for activation and only binding to phosphorylated ubiquitin is essential to unlock repression. E3 ubiquitin-protein ligase which accepts ubiquitin from E2 ubiquitin-conjugating enzymes in the form of a thioester and then directly transfers the ubiquitin to targeted substrates, such as Paris, Marf, Opa1, Miro, pnut, Septin1, Tom20 and porin. Mediates monoubiquitination as well as 'Lys-6', 'Lys-11', 'Lys-48'-linked and 'Lys-63'-linked polyubiquitination of substrates, depending on the context. Protects against mitochondrial dysfunction during cellular stress, by acting downstream of Pink1, to coordinate mitochondrial quality control mechanisms that remove and replace dysfunctional mitochondrial components. Depending on the severity of mitochondrial damage and/or dysfunction, activity ranges from preventing apoptosis and stimulating mitochondrial biogenesis to regulating mitochondrial dynamics and eliminating severely damaged mitochondria via mitophagy. Appears to be particularly important in maintaining the physiology and function of cells with high energy demands that are undergoing stress or altered metabolic environment, including spermatids, muscle cells and neurons such as the dopaminergic (DA) neurons. Activation and recruitment onto the outer membrane of damaged/dysfunctional mitochondria (OMM) requires Pink1-mediated phosphorylation of both park and ubiquitin. In depolarized mitochondria, mediates the decision between mitophagy or preventing apoptosis by inducing either the poly- or monoubiquitination of porin/VDAC; polyubiquitination of porin promotes mitophagy, while monoubiquitination of porin decreases mitochondrial calcium influx which ultimately inhibits apoptosis. When cellular stress results in irreversible mitochondrial damage, promotes the autophagic degradation of dysfunctional depolarized mitochondria (mitophagy) by promoting the ubiquitination of mitochondrial proteins. Preferentially assembles 'Lys-6'-, 'Lys-11'- and 'Lys-63'-linked polyubiquitin chains following mitochondrial damage, leading to mitophagy. In developing tissues, inhibits JNK-mediated apoptosis by negatively regulating bsk transcription. The Pink1-park pathway also promotes fission and/or inhibits fusion of damaged mitochondria by mediating the ubiquitination and subsequent degradation of proteins involved in mitochondrial fusion/fission such as Marf, Opa1 and fzo. This prevents the refusion of unhealthy mitochondria with the healthy mitochondrial network and/or initiates mitochondrial fragmentation facilitating their later engulfment by autophagosomes. Regulates motility of damaged mitochondria by phosphorylating Miro which likely promotes its park-dependent degradation by the proteasome; in motor neurons, this inhibits mitochondrial intracellular anterograde transport along the axons which probably increases the chance of the mitochondria being eliminated in the soma. The Pink1-park pathway is also involved in mitochondrial regeneration processes such as promoting mitochondrial biogenesis, activating localized mitochondrial repair, promoting selective turnover of mitochondrial proteins and initiating the mitochondrial import of endogenous proteins. Involved in mitochondrial biogenesis via the ubiquitination of transcriptional repressor Paris which leads to its subsequent proteasomal degradation and allows activation of the transcription factor srl. Promotes localized mitochondrial repair by activating the translation of specific nuclear-encoded mitochondrial RNAs (nc-mtRNAs) on the mitochondrial surface, including several key electron transport chain component nc-mtRNAs. This is E3 ubiquitin-protein ligase parkin from Drosophila melanogaster (Fruit fly).